Consider the following 159-residue polypeptide: MTDQQNTVADDESAPQFSLQRIYVRDLSFEAPKSPAIFRQQWEPSVGLDLNTRQTALEADFHEVVLTLSVTVKNGDEVAFIAEVQQAGIFLIKNLDEASMSHTLGAFCPNILFPYAREALDSLVTRGSFPALMLAPVNFDALYAQELQRLQSAGENTVQ.

The protein belongs to the SecB family. As to quaternary structure, homotetramer, a dimer of dimers. One homotetramer interacts with 1 SecA dimer.

It localises to the cytoplasm. In terms of biological role, one of the proteins required for the normal export of preproteins out of the cell cytoplasm. It is a molecular chaperone that binds to a subset of precursor proteins, maintaining them in a translocation-competent state. It also specifically binds to its receptor SecA. The polypeptide is Protein-export protein SecB (Pseudomonas fluorescens (strain ATCC BAA-477 / NRRL B-23932 / Pf-5)).